A 382-amino-acid chain; its full sequence is Cytoplasmic tRNA 2-thiolation protein 2 (382 aa).

It belongs to the CTU2/NCS2 family.

The protein resides in the cytoplasm. It participates in tRNA modification; 5-methoxycarbonylmethyl-2-thiouridine-tRNA biosynthesis. In terms of biological role, plays a central role in 2-thiolation of mcm(5)S(2)U at tRNA wobble positions of tRNA(Lys), tRNA(Glu) and tRNA(Gln). May act by forming a heterodimer with NCS6 that ligates sulfur from thiocarboxylated URM1 onto the uridine of tRNAs at wobble position. Prior mcm(5) tRNA modification by the elongator complex is required for 2-thiolation. May also be involved in protein urmylation. In Phaeosphaeria nodorum (strain SN15 / ATCC MYA-4574 / FGSC 10173) (Glume blotch fungus), this protein is Cytoplasmic tRNA 2-thiolation protein 2.